The primary structure comprises 387 residues: ATP phosphoribosyltransferase regulatory subunit (387 aa).

The protein belongs to the class-II aminoacyl-tRNA synthetase family. HisZ subfamily. As to quaternary structure, heteromultimer composed of HisG and HisZ subunits.

Its subcellular location is the cytoplasm. The protein operates within amino-acid biosynthesis; L-histidine biosynthesis; L-histidine from 5-phospho-alpha-D-ribose 1-diphosphate: step 1/9. Its function is as follows. Required for the first step of histidine biosynthesis. May allow the feedback regulation of ATP phosphoribosyltransferase activity by histidine. This chain is ATP phosphoribosyltransferase regulatory subunit, found in Methylobacillus flagellatus (strain ATCC 51484 / DSM 6875 / VKM B-1610 / KT).